Here is a 100-residue protein sequence, read N- to C-terminus: Large ribosomal subunit protein uL23 (100 aa).

Belongs to the universal ribosomal protein uL23 family. As to quaternary structure, part of the 50S ribosomal subunit. Contacts protein L29, and trigger factor when it is bound to the ribosome.

In terms of biological role, one of the early assembly proteins it binds 23S rRNA. One of the proteins that surrounds the polypeptide exit tunnel on the outside of the ribosome. Forms the main docking site for trigger factor binding to the ribosome. The sequence is that of Large ribosomal subunit protein uL23 from Buchnera aphidicola subsp. Acyrthosiphon pisum (strain 5A).